The primary structure comprises 499 residues: Neuronal acetylcholine receptor subunit alpha-7 (499 aa).

The signal sequence occupies residues 1-19; the sequence is MRGSLCLALAASILHVSLQ. Residues 20–230 lie on the Extracellular side of the membrane; that stretch reads GEFQRKLYKD…VSIRRRTLYY (211 aa). Arginine 39 and valine 41 together coordinate Ca(2+). 3 N-linked (GlcNAc...) asparagine glycosylation sites follow: asparagine 43, asparagine 87, and asparagine 130. The cysteines at positions 147 and 161 are disulfide-linked. 2 residues coordinate Ca(2+): serine 169 and tyrosine 207. A disulfide bridge links cysteine 209 with cysteine 210. 3 consecutive transmembrane segments (helical) span residues 231-251, 259-279, and 292-312; these read GLNL…VFLL, ISLG…VAEI, and QYFA…VIVL. Residues 257 to 264 are essential for TMEM35A/NACHO-mediated proper subunit assembly and trafficking to cell membrane; it reads EKISLGIT. The Cytoplasmic segment spans residues 313–466; it reads QYHHHDPDGG…WKFAACVVDR (154 aa). A helical membrane pass occupies residues 467–487; that stretch reads LCLMAFSVFTILCTIGILMSA.

Belongs to the ligand-gated ion channel (TC 1.A.9) family. Acetylcholine receptor (TC 1.A.9.1) subfamily. Alpha-7/CHRNA7 sub-subfamily. In terms of assembly, homopentamer. Homooligomer of the short form gives rise to unfunctional channels, as does coexpression of both long and short forms of the receptor. Can also form heteropentamers with CHRNB2, mainly found in basal forebrain cholinergic neurons. Interacts with RIC3; which is required for proper folding and assembly. Interacts with LYPD6. Interacts with CANX. Post-translationally, glycosylations at Asn-43, Asn-87 and Asn-130 are essential for TMEM35A/NACHO-mediated proper subunit assembly and trafficking to the cell membrane. As to expression, at least in chromaffin cells.

It is found in the postsynaptic cell membrane. The protein resides in the cell membrane. It carries out the reaction Ca(2+)(in) = Ca(2+)(out). It catalyses the reaction K(+)(in) = K(+)(out). The enzyme catalyses Na(+)(in) = Na(+)(out). The catalysed reaction is choline(out) = choline(in). It carries out the reaction NH4(+)(in) = NH4(+)(out). It catalyses the reaction L-arginine(in) = L-arginine(out). The enzyme catalyses guanidine(out) = guanidine(in). Its activity is regulated as follows. Activated by a myriad of ligands such as acetylcholine, cytisine, nicotine, choline and epibatidine. Oligomeric amyloid-beta protein 42 activates specifially CHRNA7:CHRNB2 nAchRs. Activity is modulated by positive allosteric modulators (PAMs), such as flavonoids, with a wide range of chemical diversity, pharmacological sensitivity and efficacy. AChR activity is inhibited by the antagonists alpha-conotoxons RgIA, ImI and ImII, small disulfide-constrained peptides from cone snails. Alpha-conotoxin PnIC selectively inhibits CHRNA7:CHRNB2 over CHRNA7 homopentamer. Functionally, component of neuronal acetylcholine receptors (nAChRs) that function as pentameric, ligand-gated cation channels with high calcium permeability among other activities. nAChRs are excitatory neurotrasnmitter receptors formed by a collection of nAChR subunits known to mediate synaptic transmission in the nervous system and the neuromuscular junction. Each nAchR subunit confers differential attributes to channel properties, including activation, deactivation and desensitization kinetics, pH sensitivity, cation permeability, and binding to allosteric modulators. CHRNA7 forms homopentameric neuronal acetylcholine receptors abundantly expressed in the central nervous system, characterized by fast desensitization and high calcium permeability. Also forms heteropentamers with CHRNB2, mainly expressed in basal forebrain cholinergic neurons. Involved in the modulation of calcium-dependent signaling pathways and influences the release of neurotransmitters, including dopamine, glutamate and GABA. Also expressed in non-neuronal cells such as immune cells like lymphocytes, monocytes and macrophages. In T cells, activation induces metabotropic signaling that results in an increase of intracellular Ca2+ concentrations, independent of ionotropic receptor functions. In macrophages, required for acetylcholine-mediated inhibition of TNF and other inflammatory cytokine release. Once activated by acetylcholine, nicotine or other agonists, selectively inhibits production of pro-inflammatory cytokines while leaving anti-inflammatory cytokines undisturbed. Stimulates the cholinergic anti-inflammatory pathway, controlling inflammation by inhibiting NFKB nuclear translocation and activating the JAK2-STAT3 pathway, independently of ion channel activity. Also expressed in the urothelium where it modulates reflex bladder activity by increasing intracellular calcium through internal stores and decreasing basal ATP release. This chain is Neuronal acetylcholine receptor subunit alpha-7 (CHRNA7), found in Bos taurus (Bovine).